A 154-amino-acid polypeptide reads, in one-letter code: Large ribosomal subunit protein uL13 (154 aa).

The protein belongs to the universal ribosomal protein uL13 family. As to quaternary structure, part of the 50S ribosomal subunit.

Functionally, this protein is one of the early assembly proteins of the 50S ribosomal subunit, although it is not seen to bind rRNA by itself. It is important during the early stages of 50S assembly. The sequence is that of Large ribosomal subunit protein uL13 from Brucella suis (strain ATCC 23445 / NCTC 10510).